Reading from the N-terminus, the 354-residue chain is Glyceraldehyde-3-phosphate dehydrogenase (354 aa).

Residues threonine 11 to isoleucine 12 and glycine 108 contribute to the NAD(+) site. Residue serine 137–asparagine 139 coordinates D-glyceraldehyde 3-phosphate. The active-site Nucleophile is the cysteine 138. Arginine 166 is a binding site for NAD(+). Histidine 192 to glycine 193 is a D-glyceraldehyde 3-phosphate binding site. Glutamine 299 lines the NAD(+) pocket.

The protein belongs to the glyceraldehyde-3-phosphate dehydrogenase family. Homotetramer.

The protein localises to the cytoplasm. It catalyses the reaction D-glyceraldehyde 3-phosphate + phosphate + NADP(+) = (2R)-3-phospho-glyceroyl phosphate + NADPH + H(+). The catalysed reaction is D-glyceraldehyde 3-phosphate + phosphate + NAD(+) = (2R)-3-phospho-glyceroyl phosphate + NADH + H(+). The protein operates within carbohydrate degradation; glycolysis; pyruvate from D-glyceraldehyde 3-phosphate: step 1/5. The polypeptide is Glyceraldehyde-3-phosphate dehydrogenase (Haloarcula marismortui (strain ATCC 43049 / DSM 3752 / JCM 8966 / VKM B-1809) (Halobacterium marismortui)).